The primary structure comprises 95 residues: MAIDADEVQQIAHLARIRIDEEAVSGYARDLTGILAFVEQMGNVDTDGVEPMAHPWDATQRLRPDEVTEPNLREHYQSGAPAVEAGLYLVPRVVE.

Belongs to the GatC family. In terms of assembly, heterotrimer of A, B and C subunits.

The enzyme catalyses L-glutamyl-tRNA(Gln) + L-glutamine + ATP + H2O = L-glutaminyl-tRNA(Gln) + L-glutamate + ADP + phosphate + H(+). The catalysed reaction is L-aspartyl-tRNA(Asn) + L-glutamine + ATP + H2O = L-asparaginyl-tRNA(Asn) + L-glutamate + ADP + phosphate + 2 H(+). Functionally, allows the formation of correctly charged Asn-tRNA(Asn) or Gln-tRNA(Gln) through the transamidation of misacylated Asp-tRNA(Asn) or Glu-tRNA(Gln) in organisms which lack either or both of asparaginyl-tRNA or glutaminyl-tRNA synthetases. The reaction takes place in the presence of glutamine and ATP through an activated phospho-Asp-tRNA(Asn) or phospho-Glu-tRNA(Gln). This Halorhodospira halophila (strain DSM 244 / SL1) (Ectothiorhodospira halophila (strain DSM 244 / SL1)) protein is Aspartyl/glutamyl-tRNA(Asn/Gln) amidotransferase subunit C.